A 477-amino-acid chain; its full sequence is Glycogen synthase (477 aa).

Residue Lys-15 coordinates ADP-alpha-D-glucose.

This sequence belongs to the glycosyltransferase 1 family. Bacterial/plant glycogen synthase subfamily.

The catalysed reaction is [(1-&gt;4)-alpha-D-glucosyl](n) + ADP-alpha-D-glucose = [(1-&gt;4)-alpha-D-glucosyl](n+1) + ADP + H(+). The protein operates within glycan biosynthesis; glycogen biosynthesis. In terms of biological role, synthesizes alpha-1,4-glucan chains using ADP-glucose. The polypeptide is Glycogen synthase (Shigella flexneri).